A 99-amino-acid chain; its full sequence is Nucleoid-associated protein EbfC (99 aa).

The protein belongs to the YbaB/EbfC family. Homodimer. Can form tetramers and octamers in solution.

It is found in the cytoplasm. The protein localises to the nucleoid. Binds to DNA and alters its conformation. May be involved in global regulation of gene expression. Binds specifically and non-specifically to DNA, preferentially to the 4 bp broken palindrome 5'-GTnAC-3'. Affects expression of a wide variety of genes, encoding both structural and metabolic proteins. This Borreliella burgdorferi (strain ATCC 35210 / DSM 4680 / CIP 102532 / B31) (Borrelia burgdorferi) protein is Nucleoid-associated protein EbfC.